The following is a 580-amino-acid chain: CRISPR-associated exonuclease Cas4/endonuclease Cas1 fusion (580 aa).

The segment at 1–223 (MAPSDTPPSA…RCSLLPICLP (223 aa)) is CRISPR-associated exonuclease Cas4. Cys44 contacts [4Fe-4S] cluster. Positions 112 and 125 each coordinate Mn(2+). Cys212, Cys215, and Cys221 together coordinate [4Fe-4S] cluster. Residues 248 to 580 (LYGQTPGARI…IPRYPHYCPR (333 aa)) are CRISPR-associated endonuclease Cas1. Mn(2+) is bound by residues Glu401, His472, and Glu487.

In the N-terminal section; belongs to the CRISPR-associated exonuclease Cas4 family. It in the C-terminal section; belongs to the CRISPR-associated endonuclease Cas1 family. Homodimer, forms a heterotetramer with a Cas2 homodimer. The cofactor is [4Fe-4S] cluster. Requires Mg(2+) as cofactor. It depends on Mn(2+) as a cofactor.

The enzyme catalyses exonucleolytic cleavage in the 5'- to 3'-direction to yield nucleoside 3'-phosphates.. CRISPR (clustered regularly interspaced short palindromic repeat), is an adaptive immune system that provides protection against mobile genetic elements (viruses, transposable elements and conjugative plasmids). CRISPR clusters contain spacers, sequences complementary to antecedent mobile elements, and target invading nucleic acids. CRISPR clusters are transcribed and processed into CRISPR RNA (crRNA). The Cas4 region acts as a ssDNA exonuclease, while the Cas1 region acts as a dsDNA endonuclease. Involved in the integration of spacer DNA into the CRISPR cassette. The chain is CRISPR-associated exonuclease Cas4/endonuclease Cas1 fusion (cas4-cas1) from Rhodospirillum rubrum (strain ATCC 11170 / ATH 1.1.1 / DSM 467 / LMG 4362 / NCIMB 8255 / S1).